The following is a 154-amino-acid chain: Putative pre-16S rRNA nuclease (154 aa).

It belongs to the YqgF nuclease family.

Its subcellular location is the cytoplasm. Its function is as follows. Could be a nuclease involved in processing of the 5'-end of pre-16S rRNA. The protein is Putative pre-16S rRNA nuclease of Rickettsia akari (strain Hartford).